A 122-amino-acid chain; its full sequence is Large ribosomal subunit protein bL12 (122 aa).

The tract at residues G94–K122 is disordered. The segment covering G99 to E114 has biased composition (basic and acidic residues).

It belongs to the bacterial ribosomal protein bL12 family. Homodimer. Part of the ribosomal stalk of the 50S ribosomal subunit. Forms a multimeric L10(L12)X complex, where L10 forms an elongated spine to which 2 to 4 L12 dimers bind in a sequential fashion. Binds GTP-bound translation factors.

Forms part of the ribosomal stalk which helps the ribosome interact with GTP-bound translation factors. Is thus essential for accurate translation. The protein is Large ribosomal subunit protein bL12 of Halanaerobium praevalens.